A 145-amino-acid polypeptide reads, in one-letter code: ATP synthase epsilon chain (145 aa).

Belongs to the ATPase epsilon chain family. F-type ATPases have 2 components, CF(1) - the catalytic core - and CF(0) - the membrane proton channel. CF(1) has five subunits: alpha(3), beta(3), gamma(1), delta(1), epsilon(1). CF(0) has three main subunits: a, b and c.

It localises to the cell membrane. Produces ATP from ADP in the presence of a proton gradient across the membrane. The polypeptide is ATP synthase epsilon chain (Buchnera aphidicola subsp. Baizongia pistaciae (strain Bp)).